The primary structure comprises 371 residues: Cuticle collagen 71 (371 aa).

A helical transmembrane segment spans residues 38–60; it reads GYAAVTFSTVSVICFCVTMPVVF. Disordered stretches follow at residues 108-127 and 153-371; these read AGYD…GGDA and EGPH…GTRR. Pro residues predominate over residues 174–186; that stretch reads PGPPGPPGPPGRP. The span at 188–201 shows a compositional bias: low complexity; the sequence is PNGKAGANGLNGNP. Positions 202–222 are enriched in pro residues; the sequence is GRPPEAPCEPVTPPPCPPCPA. The span at 223 to 240 shows a compositional bias: low complexity; it reads GPKGAPGQAGYPGADGQP. Residues 223 to 280 enclose the Collagen-like domain; sequence GPKGAPGQAGYPGADGQPGSQGDNGEKGSDGAAGEKGRPGPLGKIGEPGATGETGENA. A compositionally biased stretch (basic and acidic residues) spans 246–260; the sequence is NGEKGSDGAAGEKGR. Residues 314-323 are compositionally biased toward low complexity; it reads AGAPGAPGEN. A compositionally biased stretch (basic and acidic residues) spans 340–349; that stretch reads HDGKAGRAGE.

Belongs to the cuticular collagen family. In terms of assembly, collagen polypeptide chains are complexed within the cuticle by disulfide bonds and other types of covalent cross-links.

The protein localises to the membrane. It is found in the nucleus. Functionally, probable cuticular collagen-like protein. Nematode cuticles are composed largely of collagen-like proteins. The cuticle functions both as an exoskeleton and as a barrier to protect the worm from its environment. Acts downstream of the Wnt signaling pathway, perhaps in the formation of the adult cuticle. This is Cuticle collagen 71 from Caenorhabditis elegans.